The primary structure comprises 299 residues: Transcription factor BHLH148 (299 aa).

Residues R90–S127 form a disordered region. Over residues E102–E111 the composition is skewed to acidic residues. A basic motif; degenerate region spans residues S127–R140. One can recognise a bHLH domain in the interval S127 to L176. Residues E141–L176 are helix-loop-helix motif. The disordered stretch occupies residues E273–F299. The span at G288–F299 shows a compositional bias: polar residues.

The protein belongs to the bHLH protein family. In terms of assembly, interacts with TIFY10A/JAZ6, TIFY10B/JAZ7, TIFY11A/JAZ9, TIFY11C/JAZ11, and TIFY11D/JAZ12.

The protein resides in the nucleus. May act on an initial response of jasmonate-regulated gene expression toward drought tolerance as part of a BHLH148-TIFY11D/JAZ12-COI1A complex. The polypeptide is Transcription factor BHLH148 (Oryza sativa subsp. japonica (Rice)).